We begin with the raw amino-acid sequence, 551 residues long: Pentatricopeptide repeat-containing protein At3g13150 (551 aa).

The segment at 22-67 (ATAKSAKPRSQTKSTKFPSKLKASTASVGDGGQSSNDAKDSKNSKL) is disordered. Over residues 29–48 (PRSQTKSTKFPSKLKASTAS) the composition is skewed to polar residues. The segment covering 58–67 (DAKDSKNSKL) has biased composition (basic and acidic residues). PPR repeat units follow at residues 121–155 (SEDF…NCER), 156–191 (TVKS…GITP), 192–226 (DLVT…GFEP), 227–261 (DLIS…NLSP), 262–296 (NIRS…GISP), 297–331 (DVHT…GLTP), and 332–366 (DTVT…KLLS). 2 disordered regions span residues 409–435 (GKKK…SPDT) and 449–551 (SSSD…LLDD). The span at 415 to 435 (SSPVSSSAKTTSTPVSSSPDT) shows a compositional bias: low complexity.

The protein belongs to the PPR family. P subfamily.

This Arabidopsis thaliana (Mouse-ear cress) protein is Pentatricopeptide repeat-containing protein At3g13150.